Reading from the N-terminus, the 70-residue chain is Large ribosomal subunit protein eL38 (70 aa).

Lys-4 is covalently cross-linked (Glycyl lysine isopeptide (Lys-Gly) (interchain with G-Cter in SUMO2)). Lys-9 carries the N6-acetyllysine; alternate modification. Lys-9 participates in a covalent cross-link: Glycyl lysine isopeptide (Lys-Gly) (interchain with G-Cter in SUMO2); alternate. Lys-67 is modified (N6-acetyllysine).

It belongs to the eukaryotic ribosomal protein eL38 family. As to quaternary structure, component of the large ribosomal subunit.

It localises to the cytoplasm. Functionally, component of the large ribosomal subunit. The ribosome is a large ribonucleoprotein complex responsible for the synthesis of proteins in the cell. The polypeptide is Large ribosomal subunit protein eL38 (Rpl38) (Mus musculus (Mouse)).